The chain runs to 465 residues: Solute carrier family 7 member 12 (465 aa).

Residues 1-6 are Cytoplasmic-facing; that stretch reads MQLLRA. A helical membrane pass occupies residues 7–27; it reads LGVFHVSMILFSATLGTGIFV. The Extracellular portion of the chain corresponds to 28-39; the sequence is TPKAVLKYSSLN. A helical transmembrane segment spans residues 40–60; that stretch reads IPVSLSIWAGCGLLSIMSALC. Residues 61–81 lie on the Cytoplasmic side of the membrane; sequence NAEIATTYPLSGASYYFLKRT. Residues 82–102 form a helical membrane-spanning segment; it reads LGSSVAFLSLWIKLFAHFLGI. The Extracellular portion of the chain corresponds to 103-132; that stretch reads GAQCLLIATSVIQCFYSGCPAPELPTKCLA. A helical transmembrane segment spans residues 133 to 153; it reads LAILWSFGIVSARGIKTVAWF. A topological domain (cytoplasmic) is located at residue Asn154. A helical transmembrane segment spans residues 155-175; it reads TVSSFIKLSVLCLISLTVLLV. Residues 176-202 are Extracellular-facing; sequence NGKKENVSRFENALDAELPNASQIADA. A helical membrane pass occupies residues 203 to 223; that stretch reads ILQVSYSYLGSSVLIVIAGEI. The Cytoplasmic segment spans residues 224 to 234; it reads KRPTETIPKTL. A helical membrane pass occupies residues 235–255; it reads IYGISIVTVLYLLTNISYLAV. At 256–280 the chain is on the extracellular side; the sequence is LTSQEIIFSDSVGVTWMNRVFPSIQ. A helical membrane pass occupies residues 281–301; the sequence is WISSFLISAFLLGSVSCGIVS. Topologically, residues 302 to 327 are cytoplasmic; sequence ASRVFYSASQEGEFPSIYSMLNDHHS. Residues 328–351 form a helical membrane-spanning segment; that stretch reads PAVADIQIVILSSVAIISSSIIYL. Over 352 to 356 the chain is Extracellular; the sequence is VKYVS. Residues 357–375 traverse the membrane as a helical segment; the sequence is LGSFCINLLQMIGLLKIRY. Residues 376 to 386 lie on the Cytoplasmic side of the membrane; that stretch reads QNPDIPRPYKV. A helical transmembrane segment spans residues 387–407; that stretch reads WLPFIFGSIALSLFLIFTPVI. Topologically, residues 408-409 are extracellular; the sequence is QS. The chain crosses the membrane as a helical span at residues 410 to 430; the sequence is PSIEHVYQVVFLFCGFLCYWL. The Cytoplasmic portion of the chain corresponds to 431-465; that stretch reads QANLNGHATCFDTITCYCQLLFNISPSEDPEEQKN.

The protein belongs to the amino acid-polyamine-organocation (APC) superfamily. Probably forms multimers, perhaps with an unknown protein(s). In terms of tissue distribution, expressed in kidney and red blood cells (at protein level). Expressed in kidney along the collecting ducts in the cortex, outer and inner medulla. May be expressed in placenta, lungs, spleen and skeletal muscles.

It is found in the apical cell membrane. It localises to the basal cell membrane. The protein resides in the cytoplasm. Functionally, probably mediates sodium- and chloride-independent uptake of neutral amino acids. The polypeptide is Solute carrier family 7 member 12 (Mus musculus (Mouse)).